Reading from the N-terminus, the 442-residue chain is Probable D-serine dehydratase (442 aa).

N6-(pyridoxal phosphate)lysine is present on lysine 111.

The protein belongs to the serine/threonine dehydratase family. DsdA subfamily. Pyridoxal 5'-phosphate serves as cofactor.

It carries out the reaction D-serine = pyruvate + NH4(+). This is Probable D-serine dehydratase from Sinorhizobium medicae (strain WSM419) (Ensifer medicae).